Reading from the N-terminus, the 416-residue chain is Exodeoxyribonuclease 7 large subunit (416 aa).

The interval 1–21 (MTEPDSKPKKGRAGRKKAEPV) is disordered.

This sequence belongs to the XseA family. Heterooligomer composed of large and small subunits.

It is found in the cytoplasm. The catalysed reaction is Exonucleolytic cleavage in either 5'- to 3'- or 3'- to 5'-direction to yield nucleoside 5'-phosphates.. Functionally, bidirectionally degrades single-stranded DNA into large acid-insoluble oligonucleotides, which are then degraded further into small acid-soluble oligonucleotides. This is Exodeoxyribonuclease 7 large subunit from Deinococcus radiodurans (strain ATCC 13939 / DSM 20539 / JCM 16871 / CCUG 27074 / LMG 4051 / NBRC 15346 / NCIMB 9279 / VKM B-1422 / R1).